Consider the following 490-residue polypeptide: Calcium-dependent protein kinase 12 (490 aa).

One can recognise a Protein kinase domain in the interval 22–280 (YFLGQVLGQG…AHQVLCHPWI (259 aa)). Residues 28-36 (LGQGQFGTT) and Lys51 contribute to the ATP site. Residue Asp146 is the Proton acceptor of the active site. Ser186 carries the post-translational modification Phosphoserine. An autoinhibitory domain region spans residues 286–316 (APDKPLDCAVVSRLKKFSAMNKLKKMALRVI). EF-hand domains lie at 323 to 358 (EEIG…VGSE), 359 to 394 (LMES…LNKL), 395 to 430 (EREE…FGIN), and 434 to 464 (LDEM…GNGT). Ca(2+) contacts are provided by Asp336, Asp338, Ser340, Thr342, Glu347, Asp372, Asp374, Ser376, Thr378, Glu383, Asp408, Asp410, Ser412, Tyr414, Glu419, Asp442, Asp444, Asp446, Gln448, and Glu453.

This sequence belongs to the protein kinase superfamily. Ser/Thr protein kinase family. CDPK subfamily. As to quaternary structure, interacts weakly with DI19. In terms of tissue distribution, ubiquitously expressed.

The enzyme catalyses L-seryl-[protein] + ATP = O-phospho-L-seryl-[protein] + ADP + H(+). It catalyses the reaction L-threonyl-[protein] + ATP = O-phospho-L-threonyl-[protein] + ADP + H(+). With respect to regulation, activated by calcium. Autophosphorylation may play an important role in the regulation of the kinase activity. In terms of biological role, may play a role in signal transduction pathways that involve calcium as a second messenger. The chain is Calcium-dependent protein kinase 12 (CPK12) from Arabidopsis thaliana (Mouse-ear cress).